The sequence spans 541 residues: T-complex protein 1 subunit epsilon (541 aa).

At A2 the chain carries N-acetylalanine. K20 is covalently cross-linked (Glycyl lysine isopeptide (Lys-Gly) (interchain with G-Cter in SUMO2)). A Phosphoserine modification is found at S26. Residue G53 coordinates ADP. Residue G53 participates in ATP binding. Position 104 (D104) interacts with Mg(2+). ADP is bound by residues G105, T106, T107, and S175. ATP is bound by residues T106 and T107. Residues K210, K214, K265, K275, and K279 each participate in a glycyl lysine isopeptide (Lys-Gly) (interchain with G-Cter in SUMO2) cross-link. S346 bears the Phosphoserine mark. A Glycyl lysine isopeptide (Lys-Gly) (interchain with G-Cter in SUMO2) cross-link involves residue K392. ADP is bound by residues G422, D492, E508, and K513. G422 contributes to the ATP binding site. The residue at position 539 (S539) is a Phosphoserine.

This sequence belongs to the TCP-1 chaperonin family. As to quaternary structure, component of the chaperonin-containing T-complex (TRiC), a hexadecamer composed of two identical back-to-back stacked rings enclosing a protein folding chamber. Each ring is made up of eight different subunits: TCP1/CCT1, CCT2, CCT3, CCT4, CCT5, CCT6A/CCT6, CCT7, CCT8. Interacts with PACRG. Interacts with DNAAF4. Interacts with DLEC1. Interacts with SPMAP2. In terms of processing, ubiquitinated by the DCX(DCAF12) complex specifically recognizes the diglutamate (Glu-Glu) at the C-terminus, leading to its degradation.

Its subcellular location is the cytoplasm. It is found in the cytoskeleton. The protein resides in the microtubule organizing center. It localises to the centrosome. It carries out the reaction ATP + H2O = ADP + phosphate + H(+). Component of the chaperonin-containing T-complex (TRiC), a molecular chaperone complex that assists the folding of actin, tubulin and other proteins upon ATP hydrolysis. The TRiC complex mediates the folding of WRAP53/TCAB1, thereby regulating telomere maintenance. As part of the TRiC complex may play a role in the assembly of BBSome, a complex involved in ciliogenesis regulating transports vesicles to the cilia. This is T-complex protein 1 subunit epsilon (CCT5) from Pongo abelii (Sumatran orangutan).